The primary structure comprises 265 residues: Anamorsin homolog 1 (265 aa).

Residues 1 to 143 are N-terminal SAM-like domain; it reads MAATVAEALA…KVSWSLGSSF (143 aa). The tract at residues 144-175 is linker; it reads PLKKATKGLPKIQIDDDSELIDEDSLLTEDDL. C186, C195, C198, and C200 together coordinate [2Fe-2S] cluster. The tract at residues 186–200 is fe-S binding site A; that stretch reads CEVGATRKACKNCTC. 4 residues coordinate [4Fe-4S] cluster: C226, C229, C237, and C240. 2 consecutive short sequence motifs (cx2C motif) follow at residues 226–229 and 237–240; these read CGNC and CGTC. The fe-S binding site B stretch occupies residues 226 to 240; the sequence is CGNCGLGDAFRCGTC.

Belongs to the anamorsin family. In terms of assembly, monomer. [2Fe-2S] cluster serves as cofactor. It depends on [4Fe-4S] cluster as a cofactor.

It localises to the cytoplasm. The protein localises to the mitochondrion intermembrane space. Component of the cytosolic iron-sulfur (Fe-S) protein assembly (CIA) machinery. Required for the maturation of extramitochondrial Fe-S proteins. Part of an electron transfer chain functioning in an early step of cytosolic Fe-S biogenesis, facilitating the de novo assembly of a [4Fe-4S] cluster on the cytosolic Fe-S scaffold complex. Electrons are transferred from NADPH via a FAD- and FMN-containing diflavin oxidoreductase. Together with the diflavin oxidoreductase, also required for the assembly of the diferric tyrosyl radical cofactor of ribonucleotide reductase (RNR), probably by providing electrons for reduction during radical cofactor maturation in the catalytic small subunit. This chain is Anamorsin homolog 1, found in Oryza sativa subsp. japonica (Rice).